The chain runs to 84 residues: Small ribosomal subunit protein uS17 (84 aa).

Belongs to the universal ribosomal protein uS17 family. Part of the 30S ribosomal subunit.

Its function is as follows. One of the primary rRNA binding proteins, it binds specifically to the 5'-end of 16S ribosomal RNA. This Legionella pneumophila (strain Paris) protein is Small ribosomal subunit protein uS17.